Here is a 419-residue protein sequence, read N- to C-terminus: Protein FAM217A (419 aa).

4 disordered regions span residues methionine 1–proline 60, lysine 96–glutamate 119, serine 236–leucine 299, and lysine 317–lysine 382. The segment covering glutamate 7–serine 19 has biased composition (low complexity). Over residues serine 236–proline 251 the composition is skewed to low complexity. Polar residues-rich tracts occupy residues glutamate 252–valine 261 and asparagine 271–valine 281. 2 stretches are compositionally biased toward low complexity: residues serine 282–serine 296 and proline 334–alanine 345.

It belongs to the FAM217 family.

The protein is Protein FAM217A (Fam217a) of Mus musculus (Mouse).